A 72-amino-acid polypeptide reads, in one-letter code: Translation initiation factor IF-1 (72 aa).

In terms of domain architecture, S1-like spans 1–72; sequence MAKEDSIEME…SKGRIVYRAR (72 aa).

It belongs to the IF-1 family. As to quaternary structure, component of the 30S ribosomal translation pre-initiation complex which assembles on the 30S ribosome in the order IF-2 and IF-3, IF-1 and N-formylmethionyl-tRNA(fMet); mRNA recruitment can occur at any time during PIC assembly.

The protein localises to the cytoplasm. In terms of biological role, one of the essential components for the initiation of protein synthesis. Stabilizes the binding of IF-2 and IF-3 on the 30S subunit to which N-formylmethionyl-tRNA(fMet) subsequently binds. Helps modulate mRNA selection, yielding the 30S pre-initiation complex (PIC). Upon addition of the 50S ribosomal subunit IF-1, IF-2 and IF-3 are released leaving the mature 70S translation initiation complex. This is Translation initiation factor IF-1 from Nitrosococcus oceani (strain ATCC 19707 / BCRC 17464 / JCM 30415 / NCIMB 11848 / C-107).